The sequence spans 291 residues: Lys-63-specific deubiquitinase BRCC36 (291 aa).

Ala-2 carries the post-translational modification N-acetylalanine. Positions 12-179 constitute an MPN domain; sequence VHLESDAFLV…YTCFQSVQAQ (168 aa). Residues His-122, His-124, and Asp-135 each coordinate Zn(2+). The JAMM motif motif lies at 122-135; that stretch reads HSHPHITVWPSHVD. A Phosphoserine modification is found at Ser-233.

It belongs to the peptidase M67A family. BRCC36 subfamily. Component of the ARISC complex, at least composed of UIMC1/RAP80, ABRAXAS1, BRCC3/BRCC36, BABAM2 and BABAM1/NBA1. Component of the BRCA1-A complex, at least composed of BRCA1, BARD1, UIMC1/RAP80, ABRAXAS1, BRCC3/BRCC36, BABAM2 and BABAM1/NBA1. In the BRCA1-A complex, interacts directly with ABRAXAS1 and BABAM2. Component of the BRISC complex, at least composed of ABRAXAS2, BRCC3/BRCC36, BABAM2 and BABAM1/NBA1. Identified in a complex with SHMT2 and the other subunits of the BRISC complex. In the BRISC complex, interacts directly with ABRAXAS2. Identified in a complex with ABRAXAS2 and NUMA1. The BRISC complex interacts with the CSN complex. Component of the BRCA1/BRCA2 containing complex (BRCC), which also contains BRCA1, BRCA2, BARD1, BABAM2 and RAD51. BRCC is a ubiquitin E3 ligase complex that enhances cellular survival following DNA damage. Interacts with BRCA1. Binds polyubiquitin. Interacts with PWWP2B. Interacts with HDAC1; this interaction is enhanced in the presence of PWWP2B. Zn(2+) is required as a cofactor.

The protein localises to the nucleus. It is found in the cytoplasm. The protein resides in the cytoskeleton. It localises to the spindle pole. Functionally, metalloprotease that specifically cleaves 'Lys-63'-linked polyubiquitin chains. Does not have activity toward 'Lys-48'-linked polyubiquitin chains. Component of the BRCA1-A complex, a complex that specifically recognizes 'Lys-63'-linked ubiquitinated histones H2A and H2AX at DNA lesions sites, leading to target the BRCA1-BARD1 heterodimer to sites of DNA damage at double-strand breaks (DSBs). In the BRCA1-A complex, it specifically removes 'Lys-63'-linked ubiquitin on histones H2A and H2AX, antagonizing the RNF8-dependent ubiquitination at double-strand breaks (DSBs). Catalytic subunit of the BRISC complex, a multiprotein complex that specifically cleaves 'Lys-63'-linked ubiquitin in various substrates. Mediates the specific 'Lys-63'-specific deubiquitination associated with the COP9 signalosome complex (CSN), via the interaction of the BRISC complex with the CSN complex. The BRISC complex is required for normal mitotic spindle assembly and microtubule attachment to kinetochores via its role in deubiquitinating NUMA1. Plays a role in interferon signaling via its role in the deubiquitination of the interferon receptor IFNAR1; deubiquitination increases IFNAR1 activity by enhancing its stability and cell surface expression. Acts as a regulator of the NLRP3 inflammasome by mediating deubiquitination of NLRP3, leading to NLRP3 inflammasome assembly. Down-regulates the response to bacterial lipopolysaccharide (LPS) via its role in IFNAR1 deubiquitination. Deubiquitinates HDAC1 and PWWP2B leading to their stabilization. In Rattus norvegicus (Rat), this protein is Lys-63-specific deubiquitinase BRCC36 (Brcc3).